We begin with the raw amino-acid sequence, 362 residues long: Prostaglandin F2-alpha receptor (362 aa).

Topologically, residues 1–31 are extracellular; sequence MSTNNSVQPVSPASELLSNTTCQLEEDLSIS. N-linked (GlcNAc...) asparagine glycans are attached at residues Asn-4 and Asn-19. A helical transmembrane segment spans residues 32 to 54; the sequence is FSIIFMTVGILSNSLAIAILMKA. Residues 55 to 69 are Cytoplasmic-facing; that stretch reads YQRFRQKYKSSFLLL. The chain crosses the membrane as a helical span at residues 70–90; the sequence is ASALVITDFFGHLINGTIAVF. The Extracellular segment spans residues 91-109; it reads VYASDKDWIYFDKSNILCS. A disulfide bond links Cys-108 and Cys-186. The chain crosses the membrane as a helical span at residues 110–131; it reads IFGICMVFSGLCPLFLGSLMAI. Over 132 to 152 the chain is Cytoplasmic; the sequence is ERCIGVTKPIFHSTKITTKHV. A helical transmembrane segment spans residues 153–175; the sequence is KMMLSGVCFFAVFVALLPILGHR. The Extracellular portion of the chain corresponds to 176-198; the sequence is DYKIQASRTWCFYKTDQIKDWED. The helical transmembrane segment at 199-224 threads the bilayer; the sequence is RFYLLLFAFLGLLALGISFVCNAITG. The Cytoplasmic portion of the chain corresponds to 225–250; that stretch reads ISLLKVKFRSQQHRQGRSHHFEMVIQ. A helical transmembrane segment spans residues 251 to 267; it reads LLGIMCVSCICWSPFLV. Residues 268–285 lie on the Extracellular side of the membrane; it reads TMASIGMNIQDFKDSCER. The helical transmembrane segment at 286 to 307 threads the bilayer; that stretch reads TLFTLRMATWNQILDPWVYILL. The Cytoplasmic portion of the chain corresponds to 308–362; it reads RKAVLRNLYVCTRRCCGVHVISLHVWELSSIKNSLKVAAISDLPVTEKVTQQTST.

This sequence belongs to the G-protein coupled receptor 1 family.

Its subcellular location is the cell membrane. Functionally, receptor for prostaglandin F2-alpha (PGF2-alpha). The activity of this receptor is mediated by G proteins which activate a phosphatidylinositol-calcium second messenger system. Initiates luteolysis in the corpus luteum. The chain is Prostaglandin F2-alpha receptor (PTGFR) from Ovis aries (Sheep).